Reading from the N-terminus, the 117-residue chain is MDKKASRIRRATRARRKIAELCATRLVVHRTPRHTYAQVIAPNGSEVIAAASTVEKAIREQLGNTSNKAAAEAIGKLIAERAIEKGITNVAFDRSGFQYHGRVAALAESAREAGLKF.

The protein belongs to the universal ribosomal protein uL18 family. As to quaternary structure, part of the 50S ribosomal subunit; part of the 5S rRNA/L5/L18/L25 subcomplex. Contacts the 5S and 23S rRNAs.

In terms of biological role, this is one of the proteins that bind and probably mediate the attachment of the 5S RNA into the large ribosomal subunit, where it forms part of the central protuberance. The sequence is that of Large ribosomal subunit protein uL18 from Aliivibrio fischeri (strain MJ11) (Vibrio fischeri).